Reading from the N-terminus, the 622-residue chain is Glucose 1,6-bisphosphate synthase (622 aa).

Positions 73 and 175 each coordinate alpha-D-glucose 1,6-bisphosphate. The active-site Phosphoserine intermediate is the serine 175. Serine 175, aspartate 332, and aspartate 334 together coordinate Mg(2+). Serine 175 carries the post-translational modification Phosphoserine. Alpha-D-glucose 1,6-bisphosphate-binding residues include aspartate 336, arginine 337, glutamate 434, serine 436, and lysine 448.

This sequence belongs to the phosphohexose mutase family.

It localises to the cytoplasm. Its subcellular location is the cytosol. The enzyme catalyses (2R)-3-phospho-glyceroyl phosphate + alpha-D-glucose 1-phosphate = alpha-D-glucose 1,6-bisphosphate + (2R)-3-phosphoglycerate + H(+). It carries out the reaction alpha-D-glucose 6-phosphate + (2R)-3-phospho-glyceroyl phosphate = alpha-D-glucose 1,6-bisphosphate + (2R)-3-phosphoglycerate + H(+). It catalyses the reaction (2R)-3-phospho-glyceroyl phosphate + alpha-D-ribose 1-phosphate = alpha-D-ribose 1,5-bisphosphate + (2R)-3-phosphoglycerate + H(+). The catalysed reaction is 2-deoxy-alpha-D-ribose 1-phosphate + (2R)-3-phospho-glyceroyl phosphate = 2-deoxy-alpha-D-ribose 1,5-bisphosphate + (2R)-3-phosphoglycerate + H(+). The enzyme catalyses (2R)-3-phospho-glyceroyl phosphate + alpha-D-mannose 1-phosphate = alpha-D-mannose 1,6-bisphosphate + (2R)-3-phosphoglycerate + H(+). Glucose 1,6-bisphosphate synthase using 1,3-bisphosphoglycerate as a phosphate donor and a series of 1-phosphate sugars, including glucose 1-phosphate, mannose 1-phosphate, ribose 1-phosphate and deoxyribose 1-phosphate, as acceptors. In vitro, also exhibits very low phosphopentomutase and phosphoglucomutase activity which are most probably not physiologically relevant. The polypeptide is Glucose 1,6-bisphosphate synthase (Homo sapiens (Human)).